Reading from the N-terminus, the 369-residue chain is MGTVLSLSPASSAKGRRPGGLPEEKKKAPPAGDEALGGYGAPPAGKGGKGESRLKRPSVLISALTWKRLVAASAKKKKGSKKVTPKPASTGPDPLVQQRNRENLLRKGRDGPDGGGTAKPLAVPVPTVPTTAATCEPPSGGSAAAPPPGSGGGKPPPPPPPAPQAAPPAPGGSPRRVIVQASTGELLRCLGDFVCRRCYRLKELSPGELVGWFRGVDRSLLLQGWQDQAFITPANLVFVYLLCRESLRGDELASAAELQAAFLTCLYLAYSYMGNEISYPLKPFLVEPDKERFWQRCLRLIQRLSPQMLRLNADPHFFTQVFQDLKNEGEAAASTGGPPSGSSASTTSSSSARDSCATGAKHWTMNLDR.

The segment covering 1–11 has biased composition (polar residues); the sequence is MGTVLSLSPAS. Disordered regions lie at residues 1–55, 72–176, and 330–369; these read MGTV…SRLK, ASAK…SPRR, and EAAASTGGPPSGSSASTTSSSSARDSCATGAKHWTMNLDR. Residue Gly2 is the site of N-myristoyl glycine attachment. Basic residues predominate over residues 74–84; sequence AKKKKGSKKVT. Thr84 carries the phosphothreonine modification. A compositionally biased stretch (basic and acidic residues) spans 99-112; the sequence is RNRENLLRKGRDGP. Residues 122–144 are compositionally biased toward low complexity; that stretch reads AVPVPTVPTTAATCEPPSGGSAA. The span at 145–171 shows a compositional bias: pro residues; sequence APPPGSGGGKPPPPPPPAPQAAPPAPG. The segment covering 331–352 has biased composition (low complexity); the sequence is AAASTGGPPSGSSASTTSSSSA.

This sequence belongs to the cyclin-dependent kinase 5 activator family. In terms of assembly, heterodimer of a catalytic subunit and a regulatory subunit. Myristoylated. The Gly-2-Ala mutant is absent of the cell periphery, suggesting that a proper myristoylation signal is essential for the proper distribution of CDK5R2 (p39).

Its subcellular location is the cell membrane. Its function is as follows. Activator of CDK5/TPKII. This is Cyclin-dependent kinase 5 activator 2 (Cdk5r2) from Mus musculus (Mouse).